The primary structure comprises 296 residues: 4-hydroxybenzoate octaprenyltransferase (296 aa).

A run of 8 helical transmembrane segments spans residues 28–48 (PIGIYLLLWPTLSAVWIAGNG), 52–72 (LANVLIFGLGVVLMRAAGCCI), 102–122 (ALTLFAILVGVSFLLVLCTNS), 145–167 (TYYPQVVLGAAYSWGIPMAFTAA), 174–196 (GAWLLYIANLLWTVGYDTYYAMV), 219–239 (SIILTLQLLSLGCLLLAGSRF), 241–261 (LGGWFHLGLLGAAACFAWEYW), and 275–295 (FLHNHWAGMLVFIGVVLDYAL).

It belongs to the UbiA prenyltransferase family. Requires Mg(2+) as cofactor.

Its subcellular location is the cell inner membrane. It catalyses the reaction all-trans-octaprenyl diphosphate + 4-hydroxybenzoate = 4-hydroxy-3-(all-trans-octaprenyl)benzoate + diphosphate. The protein operates within cofactor biosynthesis; ubiquinone biosynthesis. Functionally, catalyzes the prenylation of para-hydroxybenzoate (PHB) with an all-trans polyprenyl group. Mediates the second step in the final reaction sequence of ubiquinone-8 (UQ-8) biosynthesis, which is the condensation of the polyisoprenoid side chain with PHB, generating the first membrane-bound Q intermediate 3-octaprenyl-4-hydroxybenzoate. This chain is 4-hydroxybenzoate octaprenyltransferase, found in Pseudomonas putida (strain ATCC 700007 / DSM 6899 / JCM 31910 / BCRC 17059 / LMG 24140 / F1).